We begin with the raw amino-acid sequence, 745 residues long: Dipeptidyl aminopeptidase 4 (745 aa).

The N-terminal stretch at methionine 1–alanine 22 is a signal peptide. Substrate-binding residues include glutamate 208 and glutamate 209. Active-site charge relay system residues include serine 613, aspartate 689, and histidine 721.

This sequence belongs to the peptidase S9B family. Homodimer.

It localises to the cytoplasm. The protein resides in the periplasm. It catalyses the reaction Release of an N-terminal dipeptide, Xaa-Yaa-|-Zaa-, from a polypeptide, preferentially when Yaa is Pro, provided Zaa is neither Pro nor hydroxyproline.. Its activity is regulated as follows. Completely inhibited by the serine protease inhibitor diisopropyl fluorophosphate (DFP) and moderately by N-tosyl-L-phenyl-alanyl chloromethyl ketone (TPCK). Somewhat inhibited by phenylmethanesulfonyl fluoride (PMSF). Activity is not affected by thiol- or metalloprotease inhibitors, such as iodoacetate (IAA), EDTA, N-tosyl-L-lysyl chloromethyl ketone (TLCK), o-phenanthlorine, N-ethylmaleimide (NEM) or dithiothreitol (DTT). Its function is as follows. Catalyzes the sequential release of Tyr-Pro, Phe-Pro and Gly-Pro from the N-terminus of peptides and proteins. Is able to cleaves bioactive peptide beta-casomorphin. The protein is Dipeptidyl aminopeptidase 4 of Pseudoxanthomonas mexicana.